The chain runs to 897 residues: uncharacterized protein (897 aa).

Disordered stretches follow at residues 25 to 89 (RLQD…TRKR) and 106 to 168 (PTRL…TPPS). Composition is skewed to low complexity over residues 32 to 44 (SSSP…SSSS), 57 to 68 (SLQNSQSSSYSL), and 106 to 142 (PTRL…SSVS). In terms of domain architecture, Helicase ATP-binding spans 263–446 (SMEQSSKCGG…YSLLKFLRIK (184 aa)). 276–283 (DDMGLGKT) contributes to the ATP binding site. The short motif at 397–400 (DEAH) is the DEAH box element. The RING-type zinc-finger motif lies at 606-655 (CSVCLDPCLAPVFIIPCGHFTCQECMSMLVGQKYGSSSTSTIIAKCPMCR). Residues 727–890 (QARQTILDII…LSRLDKEELL (164 aa)) form the Helicase C-terminal domain.

This sequence belongs to the SNF2/RAD54 helicase family.

The protein resides in the cytoplasm. Its subcellular location is the nucleus. This is an uncharacterized protein from Schizosaccharomyces pombe (strain 972 / ATCC 24843) (Fission yeast).